The following is an 869-amino-acid chain: Kinesin-like protein KIN-10A (869 aa).

A compositionally biased stretch (polar residues) spans 1 to 36 (MAPTPSSSRSNQTQYTLIRTPQTKQRLNFHSKTPNP). The segment at 1–50 (MAPTPSSSRSNQTQYTLIRTPQTKQRLNFHSKTPNPDGSKDPSPPEHPVE) is disordered. Basic and acidic residues predominate over residues 38 to 50 (GSKDPSPPEHPVE). A Kinesin motor domain is found at 48-367 (PVEVIGRIRD…LEYGAKAKCI (320 aa)). 129–136 (GPTGAGKS) provides a ligand contact to ATP. Positions 393-515 (RIAAMDEFII…EIEVEFRRSN (123 aa)) form a coiled coil.

It belongs to the TRAFAC class myosin-kinesin ATPase superfamily. Kinesin family. KIN-10 subfamily. As to quaternary structure, binds microtubules.

The protein localises to the cytoplasm. It localises to the cytoskeleton. Its subcellular location is the phragmoplast. Probable plus end-directed motor protein that may contribute to the transport of Golgi-derived vesicles in the phragmoplast. The sequence is that of Kinesin-like protein KIN-10A from Arabidopsis thaliana (Mouse-ear cress).